The primary structure comprises 94 residues: Small ribosomal subunit protein bS18 (94 aa).

The protein belongs to the bacterial ribosomal protein bS18 family. In terms of assembly, part of the 30S ribosomal subunit. Forms a tight heterodimer with protein bS6.

In terms of biological role, binds as a heterodimer with protein bS6 to the central domain of the 16S rRNA, where it helps stabilize the platform of the 30S subunit. The protein is Small ribosomal subunit protein bS18 of Polaromonas naphthalenivorans (strain CJ2).